Reading from the N-terminus, the 365-residue chain is NADH-quinone oxidoreductase subunit D (365 aa).

It belongs to the complex I 49 kDa subunit family. NDH-1 is composed of 14 different subunits. Subunits NuoB, C, D, E, F, and G constitute the peripheral sector of the complex.

Its subcellular location is the cell membrane. It carries out the reaction a quinone + NADH + 5 H(+)(in) = a quinol + NAD(+) + 4 H(+)(out). Functionally, NDH-1 shuttles electrons from NADH, via FMN and iron-sulfur (Fe-S) centers, to quinones in the respiratory chain. The immediate electron acceptor for the enzyme in this species is believed to be a menaquinone. Couples the redox reaction to proton translocation (for every two electrons transferred, four hydrogen ions are translocated across the cytoplasmic membrane), and thus conserves the redox energy in a proton gradient. This Carboxydothermus hydrogenoformans (strain ATCC BAA-161 / DSM 6008 / Z-2901) protein is NADH-quinone oxidoreductase subunit D.